The sequence spans 369 residues: Uroporphyrinogen decarboxylase (369 aa).

Residues 36–40 (RQAGR), Asp86, Tyr162, Ser217, and His342 contribute to the substrate site.

The protein belongs to the uroporphyrinogen decarboxylase family. Homodimer.

The protein localises to the cytoplasm. The enzyme catalyses uroporphyrinogen III + 4 H(+) = coproporphyrinogen III + 4 CO2. The protein operates within porphyrin-containing compound metabolism; protoporphyrin-IX biosynthesis; coproporphyrinogen-III from 5-aminolevulinate: step 4/4. Its function is as follows. Catalyzes the decarboxylation of four acetate groups of uroporphyrinogen-III to yield coproporphyrinogen-III. This is Uroporphyrinogen decarboxylase from Albidiferax ferrireducens (strain ATCC BAA-621 / DSM 15236 / T118) (Rhodoferax ferrireducens).